A 173-amino-acid polypeptide reads, in one-letter code: Translation initiation factor IF-3 (173 aa).

Belongs to the IF-3 family. As to quaternary structure, monomer.

Its subcellular location is the cytoplasm. Functionally, IF-3 binds to the 30S ribosomal subunit and shifts the equilibrium between 70S ribosomes and their 50S and 30S subunits in favor of the free subunits, thus enhancing the availability of 30S subunits on which protein synthesis initiation begins. This Phenylobacterium zucineum (strain HLK1) protein is Translation initiation factor IF-3.